The sequence spans 367 residues: Probable butyrate kinase (367 aa).

This sequence belongs to the acetokinase family.

The protein localises to the cytoplasm. The catalysed reaction is butanoate + ATP = butanoyl phosphate + ADP. This chain is Probable butyrate kinase, found in Bacillus cereus (strain G9842).